The chain runs to 471 residues: Arginine biosynthesis bifunctional protein ArgJ, mitochondrial (471 aa).

The substrate site is built by Thr-190, Lys-216, Thr-239, Glu-327, Asn-466, and Ser-471. Thr-239 serves as the catalytic Nucleophile.

This sequence belongs to the ArgJ family. Heterodimer of an alpha and a beta chain. The alpha and beta chains are autoproteolytically processed from a single precursor protein within the mitochondrion.

Its subcellular location is the mitochondrion matrix. It carries out the reaction N(2)-acetyl-L-ornithine + L-glutamate = N-acetyl-L-glutamate + L-ornithine. The catalysed reaction is L-glutamate + acetyl-CoA = N-acetyl-L-glutamate + CoA + H(+). It functions in the pathway amino-acid biosynthesis; L-arginine biosynthesis; L-ornithine and N-acetyl-L-glutamate from L-glutamate and N(2)-acetyl-L-ornithine (cyclic): step 1/1. The protein operates within amino-acid biosynthesis; L-arginine biosynthesis; N(2)-acetyl-L-ornithine from L-glutamate: step 1/4. Catalyzes two activities which are involved in the cyclic version of arginine biosynthesis: the synthesis of acetylglutamate from glutamate and acetyl-CoA, and of ornithine by transacetylation between acetylornithine and glutamate. This chain is Arginine biosynthesis bifunctional protein ArgJ, mitochondrial, found in Coprinopsis cinerea (strain Okayama-7 / 130 / ATCC MYA-4618 / FGSC 9003) (Inky cap fungus).